Consider the following 149-residue polypeptide: Large ribosomal subunit protein uL22 (149 aa).

Belongs to the universal ribosomal protein uL22 family. In terms of assembly, part of the 50S ribosomal subunit.

Functionally, this protein binds specifically to 23S rRNA; its binding is stimulated by other ribosomal proteins, e.g. L4, L17, and L20. It is important during the early stages of 50S assembly. It makes multiple contacts with different domains of the 23S rRNA in the assembled 50S subunit and ribosome. Its function is as follows. The globular domain of the protein is located near the polypeptide exit tunnel on the outside of the subunit, while an extended beta-hairpin is found that lines the wall of the exit tunnel in the center of the 70S ribosome. The polypeptide is Large ribosomal subunit protein uL22 (Petrotoga mobilis (strain DSM 10674 / SJ95)).